Consider the following 368-residue polypeptide: F-box only protein 28 (368 aa).

A compositionally biased stretch (basic and acidic residues) spans Met-1–Glu-11. The tract at residues Met-1–Asp-56 is disordered. Residues Glu-12–Gly-21 show a composition bias toward gly residues. Residues Ser-22–Gln-32 are compositionally biased toward low complexity. Residues Pro-33 to Ser-45 are compositionally biased toward pro residues. The span at Gln-46–Pro-55 shows a compositional bias: low complexity. Residues Asn-61–Val-109 enclose the F-box domain. 2 positions are modified to phosphoserine: Ser-235 and Ser-242. A Phosphothreonine modification is found at Thr-270. The tract at residues Met-328 to Lys-368 is disordered. Ser-344 carries the post-translational modification Phosphoserine.

In terms of assembly, part of a SCF (SKP1-cullin-F-box) protein ligase complex.

It is found in the chromosome. The protein localises to the centromere. Its subcellular location is the kinetochore. In terms of biological role, probably recognizes and binds to some phosphorylated proteins and promotes their ubiquitination and degradation. The sequence is that of F-box only protein 28 (Fbxo28) from Mus musculus (Mouse).